Consider the following 209-residue polypeptide: Peptidyl-tRNA hydrolase (209 aa).

Tyrosine 14 lines the tRNA pocket. Histidine 19 (proton acceptor) is an active-site residue. 3 residues coordinate tRNA: tyrosine 68, asparagine 70, and asparagine 116.

This sequence belongs to the PTH family. In terms of assembly, monomer.

Its subcellular location is the cytoplasm. It catalyses the reaction an N-acyl-L-alpha-aminoacyl-tRNA + H2O = an N-acyl-L-amino acid + a tRNA + H(+). Its function is as follows. Hydrolyzes ribosome-free peptidyl-tRNAs (with 1 or more amino acids incorporated), which drop off the ribosome during protein synthesis, or as a result of ribosome stalling. In terms of biological role, catalyzes the release of premature peptidyl moieties from peptidyl-tRNA molecules trapped in stalled 50S ribosomal subunits, and thus maintains levels of free tRNAs and 50S ribosomes. This Phenylobacterium zucineum (strain HLK1) protein is Peptidyl-tRNA hydrolase.